The primary structure comprises 242 residues: C-reactive protein 1.4 (242 aa).

Residues 1–24 (MKTFHGPTFGTAVFLYLLLFLTSA) form the signal peptide. The Pentraxin (PTX) domain maps to 30–241 (ITSKVKFPPS…GVVLSPNEIC (212 aa)). Residues Thr60 and Tyr63 each coordinate phosphocholine. 2 cysteine pairs are disulfide-bonded: Cys62/Cys125 and Cys112/Cys144. Residues Asp85 and Asn86 each contribute to the Ca(2+) site. Asn147 carries an N-linked (GlcNAc...) asparagine glycan. Residues Glu168, Gln169, Asp170, and Gln180 each contribute to the Ca(2+) site. The cysteines at positions 207 and 241 are disulfide-linked.

Belongs to the pentraxin family. As to quaternary structure, homopentamer. Pentraxin (or pentaxin) have a discoid arrangement of 5 non-covalently bound subunits. The cofactor is Ca(2+).

The protein localises to the secreted. Its function is as follows. Might serve the role of immunoglobulins. The protein is C-reactive protein 1.4 of Limulus polyphemus (Atlantic horseshoe crab).